The sequence spans 224 residues: Glutathione S-transferase U28 (224 aa).

The region spanning 6 to 85 is the GST N-terminal domain; the sequence is SKVVVLDFWA…YIDETWTDAA (80 aa). Glutathione is bound by residues 16–17, 42–43, 56–57, and 69–70; these read SP, NK, KV, and ES. Positions 91–217 constitute a GST C-terminal domain; it reads DPQSRATARF…EKVYQQVLKL (127 aa). Thr-154 carries the phosphothreonine modification.

Belongs to the GST superfamily. Tau family.

The protein localises to the cytoplasm. It is found in the cytosol. It carries out the reaction RX + glutathione = an S-substituted glutathione + a halide anion + H(+). Functionally, may be involved in the conjugation of reduced glutathione to a wide number of exogenous and endogenous hydrophobic electrophiles and have a detoxification role against certain herbicides. The chain is Glutathione S-transferase U28 (GSTU28) from Arabidopsis thaliana (Mouse-ear cress).